Consider the following 404-residue polypeptide: G1/S-specific cyclin-E2 (404 aa).

A disordered region spans residues 1–45 (MSRRSSRLQAKQQPQASQTDSPQEAQIIQAKKRKTAQDVKKRKEE). Residues 7-26 (RLQAKQQPQASQTDSPQEAQ) show a composition bias toward polar residues. S21 carries the phosphoserine modification. Residues 35 to 45 (TAQDVKKRKEE) show a composition bias toward basic and acidic residues. K348 carries the post-translational modification N6-lactoyllysine. S383 is subject to Phosphoserine. Residue T392 is modified to Phosphothreonine.

Belongs to the cyclin family. Cyclin E subfamily. As to quaternary structure, interacts with the CDK2 (in vivo) and CDK3 (in vitro) protein kinases to form a serine/threonine kinase holoenzyme complex. The cyclin subunit imparts substrate specificity to the complex. In terms of processing, phosphorylation by CDK2 triggers its release from CDK2 and degradation via the ubiquitin proteasome pathway. Post-translationally, lactylated at Lys-348. Delactylated by SIRT3.

It is found in the nucleus. In terms of biological role, essential for the control of the cell cycle at the late G1 and early S phase. This is G1/S-specific cyclin-E2 (CCNE2) from Bos taurus (Bovine).